We begin with the raw amino-acid sequence, 457 residues long: UDP-N-acetylmuramate--L-alanine ligase (457 aa).

112 to 118 (GTHGKTT) lines the ATP pocket.

It belongs to the MurCDEF family.

The protein localises to the cytoplasm. It carries out the reaction UDP-N-acetyl-alpha-D-muramate + L-alanine + ATP = UDP-N-acetyl-alpha-D-muramoyl-L-alanine + ADP + phosphate + H(+). The protein operates within cell wall biogenesis; peptidoglycan biosynthesis. Its function is as follows. Cell wall formation. The protein is UDP-N-acetylmuramate--L-alanine ligase of Solidesulfovibrio magneticus (strain ATCC 700980 / DSM 13731 / RS-1) (Desulfovibrio magneticus).